Here is a 1360-residue protein sequence, read N- to C-terminus: Ubiquitin carboxyl-terminal hydrolase 19 (1360 aa).

Residues 1-46 (MSAGASATGPRRGPPGLEEATSKKKQKDRANLESKDGDARRVSLPR) form a disordered region. Residues 1 to 1333 (MSAGASATGP…TTPDEGCLRY (1333 aa)) are Cytoplasmic-facing. Basic and acidic residues predominate over residues 28–46 (DRANLESKDGDARRVSLPR). A CS 1 domain is found at 51–140 (KDELLLDWRQ…VPLLTWPSLL (90 aa)). The disordered stretch occupies residues 163–239 (PIALEPGSEP…APSFLSDSAT (77 aa)). Basic and acidic residues predominate over residues 170 to 181 (SEPRRAKQEARN). Residues 189 to 199 (GEVGSGAGPGT) are compositionally biased toward gly residues. Residue serine 220 is modified to Phosphoserine. A CS 2 domain is found at 322-424 (LAFVKNDSYE…RQSQRWGGLE (103 aa)). The segment at 432-482 (VGGAKVAVPTGPTPLDSTPPGGGPHPLTGQEEARAVEKEKPKARSEDSGLD) is disordered. The segment covering 462–478 (EEARAVEKEKPKARSED) has biased composition (basic and acidic residues). Residues 539-1256 (TGLVNLGNTC…YAYVLFYRRR (718 aa)) form the USP domain. Cysteine 548 acts as the Nucleophile in catalysis. The Zn(2+) site is built by cysteine 833, cysteine 836, cysteine 850, cysteine 853, cysteine 859, cysteine 863, histidine 871, and cysteine 875. The segment at 833 to 875 (CAACQRKQQSEEEKLKRCTRCYRVGYCNQFCQKTHWPDHKGLC) adopts an MYND-type zinc-finger fold. Residues 965–988 (DTGAHRVWPPADRGPVPSTSGLSS) are disordered. Residue histidine 1207 is the Proton acceptor of the active site. Basic and acidic residues predominate over residues 1259–1274 (PVERPPRASHSEHHPD). Positions 1259-1281 (PVERPPRASHSEHHPDLGPAAEA) are disordered. Residues 1334-1354 (FVLGTVAALVALVLNVFYPLV) traverse the membrane as a helical segment. The Lumenal portion of the chain corresponds to 1355–1360 (SQSRWR).

In terms of assembly, interacts with RNF123. Interacts with BIRC2/c-IAP1, BIRC3/c-IAP2 and XIAP/BIRC4. Interacts with HIF1A (via N-terminus).

The protein resides in the endoplasmic reticulum membrane. It carries out the reaction Thiol-dependent hydrolysis of ester, thioester, amide, peptide and isopeptide bonds formed by the C-terminal Gly of ubiquitin (a 76-residue protein attached to proteins as an intracellular targeting signal).. Functionally, deubiquitinating enzyme that regulates the degradation of various proteins by removing ubiquitin moieties, thereby preventing their proteasomal degradation. Stabilizes RNF123, which promotes CDKN1B degradation and contributes to cell proliferation. Decreases the levels of ubiquitinated proteins during skeletal muscle formation and acts to repress myogenesis. Modulates transcription of major myofibrillar proteins. Also involved in turnover of endoplasmic-reticulum-associated degradation (ERAD) substrates. Mechanistically, deubiquitinates and thereby stabilizes several E3 ligases involved in the ERAD pathway including SYVN1 or MARCHF6. Regulates the stability of other E3 ligases including BIRC2/c-IAP1 and BIRC3/c-IAP2 by preventing their ubiquitination. Required for cells to mount an appropriate response to hypoxia by rescuing HIF1A from degradation in a non-catalytic manner and by mediating the deubiquitination of FUNDC1. Attenuates mitochondrial damage and ferroptosis by targeting and stabilizing NADPH oxidase 4/NOX4. Negatively regulates TNF-alpha- and IL-1beta-triggered NF-kappa-B activation by hydrolyzing 'Lys-27'- and 'Lys-63'-linked polyubiquitin chains from MAP3K7. Modulates also the protein level and aggregation of polyQ-expanded huntingtin/HTT through HSP90AA1. The polypeptide is Ubiquitin carboxyl-terminal hydrolase 19 (Usp19) (Mus musculus (Mouse)).